A 416-amino-acid polypeptide reads, in one-letter code: CapZ-interacting protein (416 aa).

2 disordered regions span residues 1-84 (MEER…KSSP) and 98-416 (AALL…DTKM). Over residues 8–20 (TNANVDNSASPSV) the composition is skewed to polar residues. Serine 17 is subject to Phosphoserine. Serine 68 is modified (phosphoserine; by MAPK8; in vitro). Serine 82 carries the post-translational modification Phosphoserine. At serine 83 the chain carries Phosphoserine; by MAPK8; in vitro. Serine 105 bears the Phosphoserine mark. Position 108 is a phosphoserine; by MAPK12 and MAPK13 (serine 108). Serine 116, serine 120, and serine 123 each carry phosphoserine. Threonine 124 is modified (phosphothreonine). Phosphoserine occurs at positions 126, 127, 135, and 143. Basic residues predominate over residues 159–176 (VRTRGSIKRRPPSRRFRR). Serine 177 is modified (phosphoserine). Position 179 is a phosphoserine; by MAPKAPK2 and MAPKAPK3 (serine 179). Serine 216 carries the post-translational modification Phosphoserine; by MAPK8; in vitro. One can recognise an RCSD domain in the interval 227–330 (GVRTLGPAEK…RVQNEEVGPE (104 aa)). The residue at position 244 (serine 244) is a Phosphoserine; by MAPKAPK2 or MAPKAPK3; in vitro. Basic and acidic residues predominate over residues 244–273 (SRTEKQEEDRATEEAKNGEKARRSSEEVDG). Serine 267, serine 268, serine 284, serine 298, and serine 333 each carry phosphoserine. Over residues 292 to 349 (AENRCGSPREEKPAGEEAEMEKATEVKGERVQNEEVGPEHDSQETKKLEEGAAVKETP) the composition is skewed to basic and acidic residues. Threonine 336 is subject to Phosphothreonine. Serine 351 bears the Phosphoserine mark. The segment covering 360 to 372 (DVPKQEKGKEKQQ) has biased composition (basic and acidic residues). The span at 382-397 (SPQTGPAQLETSSEVQ) shows a compositional bias: polar residues.

In terms of assembly, interacts with CAPZA2 and CAPZB. In terms of processing, dephosphorylation results in its dissociation from CAPZA2. As to expression, highly expressed in skeletal muscle and more weakly in cardiac muscle. Also expressed in several lymphoid organs, including spleen, thymus, peripheral blood leukocytes, lymph node and bone marrow.

Stress-induced phosphorylation of CAPZIP may regulate the ability of F-actin-capping protein to remodel actin filament assembly. The sequence is that of CapZ-interacting protein (RCSD1) from Homo sapiens (Human).